The primary structure comprises 205 residues: Dephospho-CoA kinase (205 aa).

In terms of domain architecture, DPCK spans 3 to 204 (KVGLTGGIGA…HRAHQPGESQ (202 aa)). ATP is bound at residue 11-16 (GAGKSE).

Belongs to the CoaE family.

It is found in the cytoplasm. The enzyme catalyses 3'-dephospho-CoA + ATP = ADP + CoA + H(+). It functions in the pathway cofactor biosynthesis; coenzyme A biosynthesis; CoA from (R)-pantothenate: step 5/5. Catalyzes the phosphorylation of the 3'-hydroxyl group of dephosphocoenzyme A to form coenzyme A. The protein is Dephospho-CoA kinase of Streptomyces avermitilis (strain ATCC 31267 / DSM 46492 / JCM 5070 / NBRC 14893 / NCIMB 12804 / NRRL 8165 / MA-4680).